The following is a 26-amino-acid chain: Dermaseptin-J1 (26 aa).

Val26 bears the Valine amide mark.

As to expression, expressed by the skin glands.

The protein resides in the secreted. Functionally, has antimicrobial activity. This Phasmahyla jandaia (Jandaia leaf frog) protein is Dermaseptin-J1.